A 307-amino-acid polypeptide reads, in one-letter code: Aspartate carbamoyltransferase catalytic subunit (307 aa).

Carbamoyl phosphate-binding residues include arginine 54 and threonine 55. Lysine 83 lines the L-aspartate pocket. Residues arginine 104, histidine 132, and glutamine 135 each coordinate carbamoyl phosphate. Arginine 165 and arginine 228 together coordinate L-aspartate. Carbamoyl phosphate-binding residues include leucine 267 and proline 268.

Belongs to the aspartate/ornithine carbamoyltransferase superfamily. ATCase family. As to quaternary structure, heterododecamer (2C3:3R2) of six catalytic PyrB chains organized as two trimers (C3), and six regulatory PyrI chains organized as three dimers (R2).

It carries out the reaction carbamoyl phosphate + L-aspartate = N-carbamoyl-L-aspartate + phosphate + H(+). Its pathway is pyrimidine metabolism; UMP biosynthesis via de novo pathway; (S)-dihydroorotate from bicarbonate: step 2/3. Catalyzes the condensation of carbamoyl phosphate and aspartate to form carbamoyl aspartate and inorganic phosphate, the committed step in the de novo pyrimidine nucleotide biosynthesis pathway. In Clostridium botulinum (strain Alaska E43 / Type E3), this protein is Aspartate carbamoyltransferase catalytic subunit.